The sequence spans 160 residues: MSSEEGKLFVGGLNFNTDERALEDHFSSFGPISEVVVVKDRETQRSRGFGFITFTNPEHASNAMRAMNGESLDGRQIRVDHAGKSARGSRGGAFGSYERGRGYPRGGGDQGYGSGRYDNRPGAYGFGYGYGYGRSRDYGGRSQGGYDRYSGGNYRDNYDN.

Residues 6 to 84 (GKLFVGGLNF…RQIRVDHAGK (79 aa)) form the RRM domain. R47 bears the Omega-N-methylarginine mark. Residues 81–116 (HAGKSARGSRGGAFGSYERGRGYPRGGGDQGYGSGR) are disordered. Over residues 103 to 114 (YPRGGGDQGYGS) the composition is skewed to gly residues. Asymmetric dimethylarginine; alternate is present on R105. R105 is modified (dimethylated arginine; alternate). At R105 the chain carries Omega-N-methylarginine; alternate. R120 and R134 each carry omega-N-methylarginine. Residues 135-160 (SRDYGGRSQGGYDRYSGGNYRDNYDN) form a disordered region. S150 carries the phosphoserine modification. Residue Y158 is modified to Phosphotyrosine.

As to quaternary structure, interacts with RPL4. Associates with the 60S ribosomal subunits.

Its subcellular location is the nucleus. The protein localises to the cytoplasm. It is found in the cell projection. It localises to the dendrite. Its function is as follows. Cold-inducible mRNA binding protein that enhances global protein synthesis at both physiological and mild hypothermic temperatures. Reduces the relative abundance of microRNAs, when overexpressed. Enhances phosphorylation of translation initiation factors and active polysome formation. The protein is RNA-binding protein 3 of Capra hircus (Goat).